Reading from the N-terminus, the 104-residue chain is Transcription factor S (104 aa).

Residues Cys-4, Cys-7, Cys-20, Cys-22, Cys-65, Cys-68, Cys-93, and Cys-96 each coordinate Zn(2+). The C4-type zinc-finger motif lies at 4 to 22; sequence CPKCGAVMFPSEGKFKCQC. The segment at 61 to 101 adopts a TFIIS-type zinc-finger fold; it reads TRVECPKCGNMEAFWWLQQTRRADESETRFFRCTRCKHTWR.

It belongs to the archaeal RpoM/eukaryotic RPA12/RPB9/RPC11 RNA polymerase family.

In terms of biological role, induces RNA cleavage activity in the RNA polymerase. In its presence, the cleavage activity of the RNA polymerase truncates the RNA back to position +15 in a stepwise manner by releasing mainly dinucleotides from the 3'-end of the nascent RNA. The truncated RNAs are able to continue elongation. Involved in transcriptional proofreading and fidelity. Misincorporation of nucleotides during elongation of transcription leads to arrested elongation complexes which are rescued by TFS-promoted removal of a dinucleotide from the 3'-end. TFS is able to induce a cleavage resynthesis cycle in stalled elongation complexes (resulting from the next missing nucleotide or a reduced incorporation rate of a wrong nucleotide) preventing misincorporation and enabling proofreading in a post-incorporation manner. Pausing of elongation complexes is the main determinant of TFS-induced RNA cleavage. The protein is Transcription factor S of Methanothermobacter thermautotrophicus (strain ATCC 29096 / DSM 1053 / JCM 10044 / NBRC 100330 / Delta H) (Methanobacterium thermoautotrophicum).